Consider the following 45-residue polypeptide: Photosystem II reaction center protein K (45 aa).

Residues 1-8 (MITAIIIA) constitute a propeptide that is removed on maturation. The helical transmembrane segment at 23-43 (ILPVIPIFFLLLAFVWQAAIG) threads the bilayer.

It belongs to the PsbK family. PSII is composed of 1 copy each of membrane proteins PsbA, PsbB, PsbC, PsbD, PsbE, PsbF, PsbH, PsbI, PsbJ, PsbK, PsbL, PsbM, PsbT, PsbX, PsbY, PsbZ, Psb30/Ycf12, at least 3 peripheral proteins of the oxygen-evolving complex and a large number of cofactors. It forms dimeric complexes.

The protein resides in the plastid. The protein localises to the chloroplast thylakoid membrane. Functionally, one of the components of the core complex of photosystem II (PSII). PSII is a light-driven water:plastoquinone oxidoreductase that uses light energy to abstract electrons from H(2)O, generating O(2) and a proton gradient subsequently used for ATP formation. It consists of a core antenna complex that captures photons, and an electron transfer chain that converts photonic excitation into a charge separation. The protein is Photosystem II reaction center protein K of Gracilaria tenuistipitata var. liui (Red alga).